We begin with the raw amino-acid sequence, 871 residues long: Ubiquitin carboxyl-terminal hydrolase 8 (871 aa).

Residues 4-99 enclose the DUSP domain; the sequence is TSPDESPDST…GETGEASVSG (96 aa). A USP domain is found at 279-869; that stretch reads TGLQNLGNTC…AAYVLFYKRL (591 aa). C288 acts as the Nucleophile in catalysis. The disordered stretch occupies residues 615–650; the sequence is ENLENPTEEEATDKTDTDGTTSVEDTNSTDVKETTE. H828 acts as the Proton acceptor in catalysis.

It belongs to the peptidase C19 family.

The catalysed reaction is Thiol-dependent hydrolysis of ester, thioester, amide, peptide and isopeptide bonds formed by the C-terminal Gly of ubiquitin (a 76-residue protein attached to proteins as an intracellular targeting signal).. Its function is as follows. Recognizes and hydrolyzes the peptide bond at the C-terminal Gly of ubiquitin. Involved in the processing of poly-ubiquitin precursors as well as that of ubiquitinated proteins. This is Ubiquitin carboxyl-terminal hydrolase 8 (UBP8) from Arabidopsis thaliana (Mouse-ear cress).